The following is a 100-amino-acid chain: DNA base-flipping protein (100 aa).

It belongs to the MGMT family. ATL subfamily.

In terms of biological role, involved in DNA damage recognition. Binds DNA containing O(6)-methylguanine. Binds to the damaged base and flips the base out of the DNA duplex into an extrahelical conformation, which allows processing by repair proteins. This Vibrio parahaemolyticus serotype O3:K6 (strain AQ3810) protein is DNA base-flipping protein.